Consider the following 133-residue polypeptide: Vesicle transport protein GOT1A (133 aa).

Over 1 to 9 the chain is Cytoplasmic; it reads MISITEWQK. A helical transmembrane segment spans residues 10–30; the sequence is IGVGITGFGVFFILFGILLYF. Aspartate 31 is a topological domain (lumenal). Residues 32-52 traverse the membrane as a helical segment; that stretch reads SVLLAFGNLLFLTGLSLIIGL. Over 53-68 the chain is Cytoplasmic; it reads RRTFAFFFQRHKLKGT. Residues 69-89 form a helical membrane-spanning segment; the sequence is SFFLGGVAIVLLRWPLLGMLL. The Lumenal segment spans residues 90 to 92; it reads EAY. Residues 93–113 traverse the membrane as a helical segment; that stretch reads GFISLFKGFFPVVFGFLGSAF. Over 114–133 the chain is Cytoplasmic; that stretch reads NIPFLSTLFQKLQGSSSSMV.

This sequence belongs to the GOT1 family.

The protein localises to the golgi apparatus membrane. Functionally, may be involved in fusion of ER-derived transport vesicles with the Golgi complex. This chain is Vesicle transport protein GOT1A, found in Mus musculus (Mouse).